A 162-amino-acid polypeptide reads, in one-letter code: Protein hcp1 (162 aa).

Belongs to the hcp1 family. In terms of assembly, hexamer. Three hcp1 monomers form two closely related hexameric rings with a 40 Angstrom internal diameter.

It localises to the secreted. Its function is as follows. Required for assembly of the protein secretion apparatus HSI-I. Actively secreted during chronic infection of cystic fibrosis patients. This is Protein hcp1 (hcp1) from Pseudomonas aeruginosa (strain ATCC 15692 / DSM 22644 / CIP 104116 / JCM 14847 / LMG 12228 / 1C / PRS 101 / PAO1).